Reading from the N-terminus, the 797-residue chain is Homoaconitase, mitochondrial (797 aa).

The N-terminal 47 residues, Met-1 to Tyr-47, are a transit peptide targeting the mitochondrion. [4Fe-4S] cluster-binding residues include Cys-404, Cys-471, and Cys-474.

The protein belongs to the aconitase/IPM isomerase family. [4Fe-4S] cluster serves as cofactor.

It is found in the mitochondrion. The catalysed reaction is (2R,3S)-homoisocitrate = cis-homoaconitate + H2O. The protein operates within amino-acid biosynthesis; L-lysine biosynthesis via AAA pathway; L-alpha-aminoadipate from 2-oxoglutarate: step 3/5. Its function is as follows. Catalyzes the reversible hydration of cis-homoaconitate to (2R,3S)-homoisocitrate, a step in the alpha-aminoadipate pathway for lysine biosynthesis. The sequence is that of Homoaconitase, mitochondrial (LYS4) from Chaetomium globosum (strain ATCC 6205 / CBS 148.51 / DSM 1962 / NBRC 6347 / NRRL 1970) (Soil fungus).